The primary structure comprises 107 residues: Phosphoribosyl-ATP pyrophosphatase (107 aa).

It belongs to the PRA-PH family.

It localises to the cytoplasm. The enzyme catalyses 1-(5-phospho-beta-D-ribosyl)-ATP + H2O = 1-(5-phospho-beta-D-ribosyl)-5'-AMP + diphosphate + H(+). It functions in the pathway amino-acid biosynthesis; L-histidine biosynthesis; L-histidine from 5-phospho-alpha-D-ribose 1-diphosphate: step 2/9. This Novosphingobium aromaticivorans (strain ATCC 700278 / DSM 12444 / CCUG 56034 / CIP 105152 / NBRC 16084 / F199) protein is Phosphoribosyl-ATP pyrophosphatase.